The sequence spans 108 residues: uncharacterized protein (108 aa).

The signal sequence occupies residues 1–16 (MKKLILIAIMASGLVA). Cys17 carries N-palmitoyl cysteine lipidation. The S-diacylglycerol cysteine moiety is linked to residue Cys17.

It is found in the cell membrane. This is an uncharacterized protein from Escherichia coli (strain K12).